The chain runs to 1794 residues: Protein TIC 214 (1794 aa).

6 helical membrane-spanning segments follow: residues 19–39 (IINS…FSIG), 68–88 (FIAG…HLAL), 91–111 (PHTI…WNNH), 133–153 (VFLN…SSML), 176–196 (VGWL…LVWI), and 227–247 (IFSI…PSPI).

The protein belongs to the TIC214 family. As to quaternary structure, part of the Tic complex.

The protein resides in the plastid. The protein localises to the chloroplast inner membrane. Its function is as follows. Involved in protein precursor import into chloroplasts. May be part of an intermediate translocation complex acting as a protein-conducting channel at the inner envelope. The protein is Protein TIC 214 of Olimarabidopsis pumila (Dwarf rocket).